A 161-amino-acid polypeptide reads, in one-letter code: Effector CFEM5 (161 aa).

The N-terminal stretch at 1-23 is a signal peptide; it reads MFSLTKSVLFTSIVAIAAQATTA. The CFEM domain occupies 24-126; it reads VSSPTQTSLP…KVLDAVVASA (103 aa). Intrachain disulfides connect Cys46–Cys78, Cys56–Cys63, and Cys65–Cys100. A heme-binding site is contributed by Asp60.

The protein belongs to the RBT5 family. Interacts with Z.mays LRR5; the interaction is direct. Interacts with Z.mays WAK17 isoform 2; the interaction is direct.

It localises to the membrane. Its subcellular location is the secreted. Suppresses host programmed cell death during infection by binding to Z.mays WAK17 isoform 2 and Z.mays LRR5, to prevent activation of Z.mays WAK17 isoform 1 and the downstream hypersensitive response. The chain is Effector CFEM5 from Gibberella zeae (strain ATCC MYA-4620 / CBS 123657 / FGSC 9075 / NRRL 31084 / PH-1) (Wheat head blight fungus).